Reading from the N-terminus, the 454-residue chain is UDP-N-acetylmuramoylalanine--D-glutamate ligase (454 aa).

114–120 serves as a coordination point for ATP; it reads GTNGKTT.

Belongs to the MurCDEF family.

The protein localises to the cytoplasm. The enzyme catalyses UDP-N-acetyl-alpha-D-muramoyl-L-alanine + D-glutamate + ATP = UDP-N-acetyl-alpha-D-muramoyl-L-alanyl-D-glutamate + ADP + phosphate + H(+). Its pathway is cell wall biogenesis; peptidoglycan biosynthesis. Functionally, cell wall formation. Catalyzes the addition of glutamate to the nucleotide precursor UDP-N-acetylmuramoyl-L-alanine (UMA). The chain is UDP-N-acetylmuramoylalanine--D-glutamate ligase from Desulfitobacterium hafniense (strain Y51).